We begin with the raw amino-acid sequence, 274 residues long: Putative 2-succinyl-6-hydroxy-2,4-cyclohexadiene-1-carboxylate synthase (274 aa).

In terms of domain architecture, AB hydrolase-1 spans Ala26–Gln259.

This sequence belongs to the AB hydrolase superfamily. MenH family. Monomer.

The catalysed reaction is 5-enolpyruvoyl-6-hydroxy-2-succinyl-cyclohex-3-ene-1-carboxylate = (1R,6R)-6-hydroxy-2-succinyl-cyclohexa-2,4-diene-1-carboxylate + pyruvate. It functions in the pathway quinol/quinone metabolism; 1,4-dihydroxy-2-naphthoate biosynthesis; 1,4-dihydroxy-2-naphthoate from chorismate: step 3/7. The protein operates within quinol/quinone metabolism; menaquinone biosynthesis. In terms of biological role, catalyzes a proton abstraction reaction that results in 2,5-elimination of pyruvate from 2-succinyl-5-enolpyruvyl-6-hydroxy-3-cyclohexene-1-carboxylate (SEPHCHC) and the formation of 2-succinyl-6-hydroxy-2,4-cyclohexadiene-1-carboxylate (SHCHC). This Bacillus subtilis (strain 168) protein is Putative 2-succinyl-6-hydroxy-2,4-cyclohexadiene-1-carboxylate synthase.